The primary structure comprises 179 residues: Large ribosomal subunit protein uL6 (179 aa).

The protein belongs to the universal ribosomal protein uL6 family. Part of the 50S ribosomal subunit.

Its function is as follows. This protein binds to the 23S rRNA, and is important in its secondary structure. It is located near the subunit interface in the base of the L7/L12 stalk, and near the tRNA binding site of the peptidyltransferase center. The protein is Large ribosomal subunit protein uL6 of Mycolicibacterium vanbaalenii (strain DSM 7251 / JCM 13017 / BCRC 16820 / KCTC 9966 / NRRL B-24157 / PYR-1) (Mycobacterium vanbaalenii).